The sequence spans 474 residues: Adenosylhomocysteinase (474 aa).

The substrate site is built by threonine 61, aspartate 136, and glutamate 196. 197–199 (TTT) lines the NAD(+) pocket. Substrate is bound by residues lysine 226 and aspartate 230. Residues asparagine 231, 260–265 (GYGDVG), glutamate 283, asparagine 318, 339–341 (IGH), and asparagine 384 contribute to the NAD(+) site.

This sequence belongs to the adenosylhomocysteinase family. Requires NAD(+) as cofactor.

It localises to the cytoplasm. The enzyme catalyses S-adenosyl-L-homocysteine + H2O = L-homocysteine + adenosine. It functions in the pathway amino-acid biosynthesis; L-homocysteine biosynthesis; L-homocysteine from S-adenosyl-L-homocysteine: step 1/1. Its function is as follows. May play a key role in the regulation of the intracellular concentration of adenosylhomocysteine. This is Adenosylhomocysteinase from Ralstonia nicotianae (strain ATCC BAA-1114 / GMI1000) (Ralstonia solanacearum).